A 166-amino-acid polypeptide reads, in one-letter code: Probable RNA-binding protein EIF1AD (166 aa).

The S1-like domain occupies T5–C89. The Nuclear localization signal signature appears at K6–K12. Phosphothreonine is present on T33. A Nuclear localization signal motif is present at residues K56 to R65. The interval D99–A166 is disordered. The span at T110–R119 shows a compositional bias: basic and acidic residues. S132, S136, S137, S138, S156, and S160 each carry phosphoserine. The span at S156–A166 shows a compositional bias: acidic residues.

Belongs to the EIF1AD family. In terms of assembly, interacts with GAPDH and STAT1.

The protein resides in the nucleus. Plays a role into cellular response to oxidative stress. Decreases cell proliferation. The polypeptide is Probable RNA-binding protein EIF1AD (EIF1AD) (Bos taurus (Bovine)).